The following is a 277-amino-acid chain: Coiled-coil domain-containing protein 117 (277 aa).

The segment at Met-1–Lys-69 is disordered. Residues Phe-26 to Gly-37 show a composition bias toward low complexity. Arg-47 is subject to Omega-N-methylarginine. The residue at position 52 (Ser-52) is a Phosphoserine. The segment covering Ala-58 to Lys-69 has biased composition (basic residues). A coiled-coil region spans residues Gln-139 to Asn-166. Residues Leu-212 to Leu-277 form a disordered region.

In terms of assembly, interacts with CIAO2B; the interaction is direct. Interacts with MMS19; the interaction is indirect.

It is found in the cytoplasm. Its subcellular location is the cytoskeleton. The protein localises to the spindle. It localises to the nucleus. Functionally, facilitates DNA repair, cell cycle progression, and cell proliferation through its interaction with CIAO2B. This chain is Coiled-coil domain-containing protein 117, found in Mus musculus (Mouse).